A 427-amino-acid chain; its full sequence is Peptidase B (427 aa).

The Mn(2+) site is built by lysine 195 and aspartate 200. Lysine 207 is an active-site residue. Mn(2+)-binding residues include aspartate 218, aspartate 277, and glutamate 279. Arginine 281 is an active-site residue.

This sequence belongs to the peptidase M17 family. Homohexamer. Requires Mn(2+) as cofactor.

Its subcellular location is the cytoplasm. The enzyme catalyses Release of an N-terminal amino acid, Xaa, from a peptide or arylamide. Xaa is preferably Glu or Asp but may be other amino acids, including Leu, Met, His, Cys and Gln.. Functionally, probably plays an important role in intracellular peptide degradation. The polypeptide is Peptidase B (Shigella flexneri).